We begin with the raw amino-acid sequence, 135 residues long: Ribosome-binding factor A (135 aa).

This sequence belongs to the RbfA family. Monomer. Binds 30S ribosomal subunits, but not 50S ribosomal subunits or 70S ribosomes.

It is found in the cytoplasm. Functionally, one of several proteins that assist in the late maturation steps of the functional core of the 30S ribosomal subunit. Associates with free 30S ribosomal subunits (but not with 30S subunits that are part of 70S ribosomes or polysomes). Required for efficient processing of 16S rRNA. May interact with the 5'-terminal helix region of 16S rRNA. In Rhizobium meliloti (strain 1021) (Ensifer meliloti), this protein is Ribosome-binding factor A.